The following is a 229-amino-acid chain: MKIKATFSCPHSLEEAKTIQENLKKKVILEDQFSEVNYVAGVDVGFRDNYQLTQAAIAVLSFPKLELVETQIACLPTTFPYIPGFLSFREIPAILKALEKLKIPPNIILCDGQGIAHPRRLGIASHLGVLIDLPTIGVAKSLLVGKHEEVPPEKGNWQPLIDKGEIIGVVLRSRTNIKPIYVSIGHKISLPTAIDYVMQCLTKYRLPETTRWADKLASNKGNMINLSKI.

Residues D43 and D111 each contribute to the Mg(2+) site.

The protein belongs to the endonuclease V family. Requires Mg(2+) as cofactor.

The protein resides in the cytoplasm. The enzyme catalyses Endonucleolytic cleavage at apurinic or apyrimidinic sites to products with a 5'-phosphate.. In terms of biological role, DNA repair enzyme involved in the repair of deaminated bases. Selectively cleaves double-stranded DNA at the second phosphodiester bond 3' to a deoxyinosine leaving behind the intact lesion on the nicked DNA. The chain is Endonuclease V from Rippkaea orientalis (strain PCC 8801 / RF-1) (Cyanothece sp. (strain PCC 8801)).